We begin with the raw amino-acid sequence, 640 residues long: 1-deoxy-D-xylulose-5-phosphate synthase (640 aa).

Residues His78 and 119-121 (GHS) contribute to the thiamine diphosphate site. Asp151 contacts Mg(2+). Thiamine diphosphate is bound by residues 152–153 (GA), Asn180, Tyr289, and Glu371. Asn180 provides a ligand contact to Mg(2+).

The protein belongs to the transketolase family. DXPS subfamily. In terms of assembly, homodimer. Mg(2+) is required as a cofactor. Requires thiamine diphosphate as cofactor.

It carries out the reaction D-glyceraldehyde 3-phosphate + pyruvate + H(+) = 1-deoxy-D-xylulose 5-phosphate + CO2. It participates in metabolic intermediate biosynthesis; 1-deoxy-D-xylulose 5-phosphate biosynthesis; 1-deoxy-D-xylulose 5-phosphate from D-glyceraldehyde 3-phosphate and pyruvate: step 1/1. Its function is as follows. Catalyzes the acyloin condensation reaction between C atoms 2 and 3 of pyruvate and glyceraldehyde 3-phosphate to yield 1-deoxy-D-xylulose-5-phosphate (DXP). The sequence is that of 1-deoxy-D-xylulose-5-phosphate synthase from Bartonella henselae (strain ATCC 49882 / DSM 28221 / CCUG 30454 / Houston 1) (Rochalimaea henselae).